Consider the following 544-residue polypeptide: MSAKEIKFSTDARAHLLRGVELLNNAVKVTLGPKGRNVVIDKAYGAPRITKDGVTVAREIELGNKFENMGAQMVREVASKTNDLAGDGTTTATVLAASIFREGAKLVAAGMNPMDLRRGIDLGVSAIVKEIQARARKVKSSGEIAQVGAIAANGDATVGEMIAKAMEKVGNEGVITVEEARTAETELDVVEGMQFDRGYLSPYFVTNAEKMRVELEDPYILLHEKKLGSLQALLPILEAVVQTGKPLLLISEDVEGEALATLVVNKLRGGLKVAAVKAPGFGDRRKAMLEDIAALTSGQMISEDLGIKLENVTLYMLGRAKRVLIEKDTTTIIDGTGEKAAIQARIQQMKAQIEETTSDYDKEKLQERLAKLAGGVAVIRVGGATETEVKEKKDRIEDALNATRAAVEEGIVPGGGVALLRAKSALTGMVGENADVTAGISIVLRALEAPIRQIAENAGFEGSIIVGRLTGRNDHNQGFDAQTETYVDMVEAGIVDPAKVVRTALQDAGSIAALLITAEVMIADIPARNPAPAVGNGGMGDMGY.

ATP-binding positions include 30–33 (TLGP), lysine 51, 87–91 (DGTTT), glycine 415, and aspartate 496.

The protein belongs to the chaperonin (HSP60) family. As to quaternary structure, forms a cylinder of 14 subunits composed of two heptameric rings stacked back-to-back. Interacts with the co-chaperonin GroES.

It localises to the cytoplasm. The catalysed reaction is ATP + H2O + a folded polypeptide = ADP + phosphate + an unfolded polypeptide.. Its function is as follows. Together with its co-chaperonin GroES, plays an essential role in assisting protein folding. The GroEL-GroES system forms a nano-cage that allows encapsulation of the non-native substrate proteins and provides a physical environment optimized to promote and accelerate protein folding. The polypeptide is Chaperonin GroEL 3 (Rhizobium etli (strain ATCC 51251 / DSM 11541 / JCM 21823 / NBRC 15573 / CFN 42)).